The sequence spans 210 residues: Large ribosomal subunit protein bL25 (210 aa).

Belongs to the bacterial ribosomal protein bL25 family. CTC subfamily. As to quaternary structure, part of the 50S ribosomal subunit; part of the 5S rRNA/L5/L18/L25 subcomplex. Contacts the 5S rRNA. Binds to the 5S rRNA independently of L5 and L18.

This is one of the proteins that binds to the 5S RNA in the ribosome where it forms part of the central protuberance. The polypeptide is Large ribosomal subunit protein bL25 (Herminiimonas arsenicoxydans).